The following is a 1400-amino-acid chain: ABC transporter G family member 30 (1400 aa).

The N-linked (GlcNAc...) asparagine glycan is linked to N116. Positions 141 to 414 constitute an ABC transporter 1 domain; it reads LLSEFICSKK…FEEFGFKCPE (274 aa). ATP is bound at residue 174–181; it reads GPPGCGKT. N472 is a glycosylation site (N-linked (GlcNAc...) asparagine). The ABC transmembrane type-2 1 domain maps to 492–704; it reads EMLKACSRRE…AEIGLTANEF (213 aa). The next 7 helical transmembrane spans lie at 510–530, 553–573, 582–602, 628–648, 652–672, 679–699, and 738–758; these read FIYLFKSALLVFNALVTMTVF, LFRLLADGLPELTLTISRLGV, FYPAWAYAIPSIILKIPLSVL, FLILSTFNLSCVSMFRAIAAI, IIASTITGAISILVLSLFGGF, MPAWLGWGFWLSPLSYAEIGL, and TAFGALVGFVLFFNALYVLAL. The 246-residue stretch at 808–1053 folds into the ABC transporter 2 domain; that stretch reads VTFQNVQYYI…VIEYFESFSG (246 aa). 845-852 lines the ATP pocket; sequence GVSGAGKT. Residues N899 and N1040 are each glycosylated (N-linked (GlcNAc...) asparagine). Positions 1125 to 1339 constitute an ABC transmembrane type-2 2 domain; sequence VQLKACLWKQ…VLEGLLSSQY (215 aa). Transmembrane regions (helical) follow at residues 1144 to 1164, 1179 to 1199, 1228 to 1248, 1263 to 1283, 1289 to 1309, 1317 to 1337, and 1372 to 1392; these read HNITRIVFILLDSTLCGLLFW, IFGSMYTLVVFPGMNNCAAVI, VLIEVPYSLLQSLLCTIIVYP, LYSIFCSLLIFNYSGMLMVAL, MAVTLRSSFFSMLNLFAGFVI, WWIWMYYLSPTSWVLEGLLSS, and VVAFVLIAYPIIVATLFAFFM.

This sequence belongs to the ABC transporter superfamily. ABCG family. PDR (TC 3.A.1.205) subfamily. In terms of tissue distribution, confined to roots. In seeds, mainly expressed in the embryo and, to a lesser extent, in the endosperm.

The protein localises to the cell membrane. It carries out the reaction abscisate(out) + ATP + H2O = abscisate(in) + ADP + phosphate + H(+). In terms of biological role, together with ABCG40, import into the embryo the abscisic acid (ABA) delivered from the endosperm via ABCG25 and ABCG31-mediated export to suppress radicle extension and subsequent embryonic growth. Involved in root secretion of phytochemicals (phenolics and sugars) which regulate soil microbiota, influencing both fungal and bacterial communities. May be a general defense protein. This chain is ABC transporter G family member 30, found in Arabidopsis thaliana (Mouse-ear cress).